A 296-amino-acid chain; its full sequence is LysM and putative peptidoglycan-binding domain-containing protein 4 (296 aa).

Topologically, residues 1–217 (MRHEELLTKT…PMDGADCGIQ (217 aa)) are extracellular. Residues 29–67 (KNGSGDSGDSSEEESHRVVLRPRGKERHKSGVHQPPQAG) form a disordered region. An N-linked (GlcNAc...) asparagine glycan is attached at asparagine 30. The span at 46-59 (VVLRPRGKERHKSG) shows a compositional bias: basic residues. A LysM domain is found at 74 to 118 (LQRELAQEDSLNKLALQYGCKVADIKKVNNFIREQDLYALKSVKI). The chain crosses the membrane as a helical span at residues 218 to 238 (WWNAVFIMLLIGIVLPVFYLV). Topologically, residues 239 to 296 (YFKIQASGETPNSLNTTVIPNGSMAMGTVPGQAPRLAVAVPAVTSADSQFSQTTQAGS) are cytoplasmic.

It localises to the membrane. The protein is LysM and putative peptidoglycan-binding domain-containing protein 4 (LYSMD4) of Homo sapiens (Human).